Here is a 309-residue protein sequence, read N- to C-terminus: Elongation factor Ts (309 aa).

The tract at residues 82-85 is involved in Mg(2+) ion dislocation from EF-Tu; sequence TDFV.

The protein belongs to the EF-Ts family.

Its subcellular location is the cytoplasm. Functionally, associates with the EF-Tu.GDP complex and induces the exchange of GDP to GTP. It remains bound to the aminoacyl-tRNA.EF-Tu.GTP complex up to the GTP hydrolysis stage on the ribosome. This Rickettsia massiliae (strain Mtu5) protein is Elongation factor Ts.